We begin with the raw amino-acid sequence, 307 residues long: MLNTTSVTEFLLLGVTDIQELQPFLFVVFLTIYFISVTGNGAVLMIVISDPRLHSLMYFFLGNLSYLDICYSTVTLPKMLQNFLSTHKAISFLGCISQLHFFHSLGSTESMLFAVMAFDLSVAICKPLRYTVIMNPQLCTQMAITIWVIGFFHALLHSVMTSRLNFCGSNRIHHFLCDIKPLLKLACGNTELNQWLLSTVTGTIAMGPFFLTLLSYFYIITYLFFKTRSCSMLCKALSTCASHFMVVILFYAPVLFTYIHPALESFMDQDRIVAIMYTVVTPVLNPLIYTLRNKEVKGALGRVIRRL.

Topologically, residues Met-1–Pro-23 are extracellular. N-linked (GlcNAc...) asparagine glycosylation occurs at Asn-3. A helical transmembrane segment spans residues Phe-24 to Leu-44. At Met-45 to Arg-52 the chain is on the cytoplasmic side. The helical transmembrane segment at Leu-53–Thr-73 threads the bilayer. The Extracellular segment spans residues Val-74 to Ser-97. Cys-95 and Cys-187 are disulfide-bonded. Residues Gln-98–Phe-118 traverse the membrane as a helical segment. Topologically, residues Asp-119–Gln-137 are cytoplasmic. The chain crosses the membrane as a helical span at residues Leu-138 to Ser-158. The Extracellular portion of the chain corresponds to Val-159 to Trp-195. The helical transmembrane segment at Leu-196 to Ser-215 threads the bilayer. At Tyr-216–Ala-236 the chain is on the cytoplasmic side. The chain crosses the membrane as a helical span at residues Leu-237–Thr-257. Residues Tyr-258–Asp-270 lie on the Extracellular side of the membrane. Residues Arg-271–Leu-291 traverse the membrane as a helical segment. Topologically, residues Arg-292–Leu-307 are cytoplasmic.

This sequence belongs to the G-protein coupled receptor 1 family.

Its subcellular location is the cell membrane. Functionally, odorant receptor. This is Olfactory receptor 12D2 (OR12D2) from Homo sapiens (Human).